The sequence spans 1560 residues: MHDARIFNSSSNKTMNQNDEAGKSKIKPLRTNQRRVIGASKSSSHMGSHVGTTLIIGKNSHSTSHGVRNNSPENTIVIGRRNFSDGQIEYTKPASHSNKFKKDSILRDPNIDSNVEASKKLSEQIQLTVWFHEPRTSTEDVIIDASVIPGLKEGDICELVPLNTFKPHKKPKRLIFIIKNQSLLSKSSSLHTSNNNNNAGATTSTLSANNNNTTKTKTNFQISLISNPLQNLMDLPPRSLVQLKTILDVESIEADTIEIFIKDINLSRDLMWTFSSSLVGTCVYSEKRLTFLSNRTGVVKKIYKNGNELFSALICEKTKVVFRSKSAKLVFLVQLSREMWHFEETGEIMFHKLVNTLFPKIFKKWRDKNTHHAITIVLFTSVDLTNIPWTSLGQGERPNNRRDYFRVVVDQVSIFHWDRIMANLRLEFANFKRDIMLNCQPENNGKFTMAGQSLPSVKGNVLEAINVGIHLVNDRFKNTDLKHSLNHFILVTPGTGLFDVDYSLMHETSKKMLSIDCALDIVCLSQPPLHIVPLFRYRDPSKDGQISHCVPHWCDISFYKDSTANSTQWIPHCKIYELQMMGVMENEINDVKIERYRVPNEAKSMVEAMDKYDSDVFKPVNKDSDSKVTRELSSSPEQSTINSKTGTPKENSKPLSLIWNNRTSLLPNSSTARIDVSTTNSSVLGTVANSGKDVSALSSLYTLNKTSADKSVVHAPSIRADSRKGVKENVSRDRKEFNEITRTKLRPRLQKTEEFYKSDDSVSNTSKSRDILDSKSRNKQSSTKVEEEFETLTNLLWTEIRNPSKESHSDMLSFLRLSRWNDIFPSNIKRRLVKWRSFESPAALPVTTSIFPSTKQLETDYSFQIYSVFLNSENDLEIESTHDLMREMIQLRLLLGFQICYSDQVKKFESSRKPGGNAESLIKYFPKGSCYGSRIYMSLDDEIHRISCDYNGNLYVQMYRKIEELKHSRLLGSKDYRQQSYVPLIRTRYVDEYAPAKFDFINTKPLKYNWNQFDQLIAGYDDAIPPEKRQFHKMKFVVLPANIPKNAYFISNENLTDEEIRVEGLRKLIGLIERGKFVKSDDKESKRKEEILPEISFYTGNLYEFLSDQAETYDATGNEPSNSLMLGENMRFTKSIKLSQLAQELQSPTGVRLVDRTWHFKRHLHCFLGNELVSWFIECFEDIDNRNDATSYGQSLMDRGMIKHVESRHGFLDGYYFYTFEGEYIDKNYKPERLNSGWFNRKKNSSEKGSAVTSPTYTRNNSDTESAKSPVFPVQDNLDLRKITSNSIGQHMYDSETSSMAGSSTKTKQKKKFILSRSVKFNADPLKKSFRPEIVTVHYDRVHNPEHCYHIRLQWLNTTKKFIDDAILNWSRLCERHGLKLVETPWLELCTIPQVNPFHSFVDLKLVINPWTDPEFSDPNILKDNKFYYHLYLMKKSDFLLDNRSTVFFSKDHIEISYSWGKPIFQYAQYIHKTGAYIVELRDNGDLFLAPNNIHITRLNTSLSSVPEQDYLKSYKMDSQKVMLKFRSACTNEKILRGIFKEAKENWREKCSEVVLPAIN.

Disordered stretches follow at residues 1 to 30 (MHDA…KPLR), 188 to 212 (SSLH…NNNN), 617 to 654 (FKPV…NSKP), and 756 to 784 (YKSD…SSTK). The span at 7 to 19 (FNSSSNKTMNQND) shows a compositional bias: polar residues. Residues 617-630 (FKPVNKDSDSKVTR) are compositionally biased toward basic and acidic residues. Residues 631-649 (ELSSSPEQSTINSKTGTPK) are compositionally biased toward polar residues. A compositionally biased stretch (basic and acidic residues) spans 767–776 (KSRDILDSKS). One can recognise a DEP domain in the interval 1147 to 1222 (SPTGVRLVDR…DGYYFYTFEG (76 aa)). The disordered stretch occupies residues 1237-1270 (GWFNRKKNSSEKGSAVTSPTYTRNNSDTESAKSP). Residues 1247-1264 (EKGSAVTSPTYTRNNSDT) show a composition bias toward polar residues.

This sequence belongs to the IML1 family.

It localises to the vacuole membrane. This chain is Vacuolar membrane-associated protein IML1 (IML1), found in Debaryomyces hansenii (strain ATCC 36239 / CBS 767 / BCRC 21394 / JCM 1990 / NBRC 0083 / IGC 2968) (Yeast).